Here is a 320-residue protein sequence, read N- to C-terminus: Cytochrome f (320 aa).

The N-terminal stretch at Met1–Ala35 is a signal peptide. Heme contacts are provided by Tyr36, Cys56, Cys59, and His60. Residues Ile286–Leu305 form a helical membrane-spanning segment.

This sequence belongs to the cytochrome f family. As to quaternary structure, the 4 large subunits of the cytochrome b6-f complex are cytochrome b6, subunit IV (17 kDa polypeptide, petD), cytochrome f and the Rieske protein, while the 4 small subunits are PetG, PetL, PetM and PetN. The complex functions as a dimer. It depends on heme as a cofactor.

Its subcellular location is the plastid. The protein localises to the chloroplast thylakoid membrane. Its function is as follows. Component of the cytochrome b6-f complex, which mediates electron transfer between photosystem II (PSII) and photosystem I (PSI), cyclic electron flow around PSI, and state transitions. The chain is Cytochrome f (petA) from Spinacia oleracea (Spinach).